Consider the following 129-residue polypeptide: Small ribosomal subunit protein uS11 (129 aa).

It belongs to the universal ribosomal protein uS11 family. In terms of assembly, part of the 30S ribosomal subunit. Interacts with proteins S7 and S18. Binds to IF-3.

Located on the platform of the 30S subunit, it bridges several disparate RNA helices of the 16S rRNA. Forms part of the Shine-Dalgarno cleft in the 70S ribosome. This chain is Small ribosomal subunit protein uS11, found in Yersinia enterocolitica serotype O:8 / biotype 1B (strain NCTC 13174 / 8081).